The following is a 434-amino-acid chain: Putative G3BP-like protein (434 aa).

Residues Ile-18 to Phe-134 form the NTF2 domain. 2 disordered regions span residues Glu-141–Tyr-180 and Val-274–Gln-308. A Phosphoserine modification is found at Ser-145. A compositionally biased stretch (basic and acidic residues) spans Ala-148–Ala-157. Positions Ser-276 to Val-291 are enriched in low complexity. Polar residues predominate over residues Ala-296–Gln-308. The 72-residue stretch at Thr-315–Arg-386 folds into the RRM domain. The tract at residues Gly-390–Asn-434 is disordered. Residues Phe-419–Thr-428 are compositionally biased toward basic and acidic residues.

Functionally, probable scaffold protein that may be involved in mRNA transport. The chain is Putative G3BP-like protein (nxt3) from Schizosaccharomyces pombe (strain 972 / ATCC 24843) (Fission yeast).